We begin with the raw amino-acid sequence, 176 residues long: Peptide methionine sulfoxide reductase MsrA (176 aa).

Cys-12 is an active-site residue.

Belongs to the MsrA Met sulfoxide reductase family.

It catalyses the reaction L-methionyl-[protein] + [thioredoxin]-disulfide + H2O = L-methionyl-(S)-S-oxide-[protein] + [thioredoxin]-dithiol. The catalysed reaction is [thioredoxin]-disulfide + L-methionine + H2O = L-methionine (S)-S-oxide + [thioredoxin]-dithiol. Its function is as follows. Has an important function as a repair enzyme for proteins that have been inactivated by oxidation. Catalyzes the reversible oxidation-reduction of methionine sulfoxide in proteins to methionine. The sequence is that of Peptide methionine sulfoxide reductase MsrA from Thermus thermophilus (strain ATCC BAA-163 / DSM 7039 / HB27).